The sequence spans 159 residues: Endoribonuclease YbeY (159 aa).

Zn(2+) is bound by residues H124, H128, and H134.

Belongs to the endoribonuclease YbeY family. Zn(2+) is required as a cofactor.

It is found in the cytoplasm. Its function is as follows. Single strand-specific metallo-endoribonuclease involved in late-stage 70S ribosome quality control and in maturation of the 3' terminus of the 16S rRNA. In Halalkalibacterium halodurans (strain ATCC BAA-125 / DSM 18197 / FERM 7344 / JCM 9153 / C-125) (Bacillus halodurans), this protein is Endoribonuclease YbeY.